A 200-amino-acid chain; its full sequence is ATP synthase subunit b 2 (200 aa).

Residues methionine 1 to threonine 16 are compositionally biased toward polar residues. Positions methionine 1–alanine 38 are disordered. Residues threonine 46–serine 66 traverse the membrane as a helical segment.

The protein belongs to the ATPase B chain family. As to quaternary structure, F-type ATPases have 2 components, F(1) - the catalytic core - and F(0) - the membrane proton channel. F(1) has five subunits: alpha(3), beta(3), gamma(1), delta(1), epsilon(1). F(0) has three main subunits: a(1), b(2) and c(10-14). The alpha and beta chains form an alternating ring which encloses part of the gamma chain. F(1) is attached to F(0) by a central stalk formed by the gamma and epsilon chains, while a peripheral stalk is formed by the delta and b chains.

It is found in the cell inner membrane. In terms of biological role, f(1)F(0) ATP synthase produces ATP from ADP in the presence of a proton or sodium gradient. F-type ATPases consist of two structural domains, F(1) containing the extramembraneous catalytic core and F(0) containing the membrane proton channel, linked together by a central stalk and a peripheral stalk. During catalysis, ATP synthesis in the catalytic domain of F(1) is coupled via a rotary mechanism of the central stalk subunits to proton translocation. Functionally, component of the F(0) channel, it forms part of the peripheral stalk, linking F(1) to F(0). The b'-subunit is a diverged and duplicated form of b found in plants and photosynthetic bacteria. This chain is ATP synthase subunit b 2 (atpF2), found in Methylorubrum populi (strain ATCC BAA-705 / NCIMB 13946 / BJ001) (Methylobacterium populi).